The sequence spans 1915 residues: Cysteine repeat modular protein 2 (1915 aa).

The N-terminal stretch at 1–23 is a signal peptide; sequence MKFKKELINILALIFVLKKNIFA. FU repeat units lie at residues 53–98, 104–151, 161–208, 210–263, and 267–315; these read LGLC…QTYV, SCIC…GYTQ, QLLC…LQYK, NGIC…GYVV, and TQRC…GNYQ. Asn-138 carries N-linked (GlcNAc...) asparagine glycosylation. Asn-274, Asn-279, and Asn-316 each carry an N-linked (GlcNAc...) asparagine glycan. FU repeat units follow at residues 317 to 362, 373 to 422, 427 to 492, 496 to 546, and 554 to 602; these read SSLC…GFYT, QPIC…QTYY, TRSC…GFYQ, NNSC…SQNN, and TQAC…GTYM. An N-linked (GlcNAc...) asparagine glycan is attached at Asn-409. N-linked (GlcNAc...) asparagine glycans are attached at residues Asn-496, Asn-572, Asn-603, and Asn-621. FU repeat units lie at residues 606–639, 640–686, and 690–739; these read TNQCSLCGFGCSSCTNGTFNSCISCLNGYYLQQN, YNVC…GFYV, and QQAC…NECL. N-linked (GlcNAc...) asparagine glycosylation occurs at Asn-742. 2 FU repeats span residues 760-814 and 818-865; these read DGQC…GFYY and NKQC…GYYQ. N-linked (GlcNAc...) asparagine glycosylation is found at Asn-909, Asn-930, Asn-1051, Asn-1085, and Asn-1193. The 41-residue stretch at 1184 to 1224 folds into the EGF-like domain; sequence VQIPCDSNINCSGNGKCLWSQDNYNEILCICNINYAGRYCE. Cystine bridges form between Cys-1188/Cys-1200, Cys-1194/Cys-1212, and Cys-1214/Cys-1223. Residues Asn-1250, Asn-1297, Asn-1519, Asn-1546, Asn-1554, Asn-1580, and Asn-1596 are each glycosylated (N-linked (GlcNAc...) asparagine). 5 helical membrane-spanning segments follow: residues 1599 to 1619, 1662 to 1682, 1704 to 1724, 1763 to 1783, and 1796 to 1816; these read LLYALLIYIIFITIFIVISII, YAQLIINLFLYNAIFVLVYSL, STSVACSIVTYYLTICMVNLF, GLVFMLQAGMGIPIIILILSF, and FASFVIDNILDIIILISFCFI. N-linked (GlcNAc...) asparagine glycosylation is present at Asn-1867.

Its subcellular location is the membrane. Required for mucocyst secretion. This Tetrahymena thermophila (strain SB210) protein is Cysteine repeat modular protein 2.